The following is a 146-amino-acid chain: Small RNA-binding protein 11, chloroplastic (146 aa).

Residues 1–31 (MAALARIGGRHLKSVCLINSSASCFFTQRRG) constitute a chloroplast transit peptide. One can recognise an RRM domain in the interval 34 to 112 (SKLFIGGLSF…RTIFVDYAKA (79 aa)). Ser-42 bears the Phosphoserine mark.

In terms of tissue distribution, expressed in rosette leaves, cauline leaves, stems and flowers.

The protein resides in the plastid. It is found in the chloroplast. Functionally, probable RNA-binding protein that may be involved in salt and oxidative stress tolerance. The chain is Small RNA-binding protein 11, chloroplastic from Arabidopsis thaliana (Mouse-ear cress).